Here is a 122-residue protein sequence, read N- to C-terminus: UPF0102 protein BQ09720 (122 aa).

This sequence belongs to the UPF0102 family.

The chain is UPF0102 protein BQ09720 from Bartonella quintana (strain Toulouse) (Rochalimaea quintana).